Here is a 373-residue protein sequence, read N- to C-terminus: 4-hydroxy-3-methylbut-2-en-1-yl diphosphate synthase (flavodoxin) (373 aa).

4 residues coordinate [4Fe-4S] cluster: C270, C273, C305, and E312.

Belongs to the IspG family. The cofactor is [4Fe-4S] cluster.

The catalysed reaction is (2E)-4-hydroxy-3-methylbut-2-enyl diphosphate + oxidized [flavodoxin] + H2O + 2 H(+) = 2-C-methyl-D-erythritol 2,4-cyclic diphosphate + reduced [flavodoxin]. Its pathway is isoprenoid biosynthesis; isopentenyl diphosphate biosynthesis via DXP pathway; isopentenyl diphosphate from 1-deoxy-D-xylulose 5-phosphate: step 5/6. Its function is as follows. Converts 2C-methyl-D-erythritol 2,4-cyclodiphosphate (ME-2,4cPP) into 1-hydroxy-2-methyl-2-(E)-butenyl 4-diphosphate. In Vibrio atlanticus (strain LGP32) (Vibrio splendidus (strain Mel32)), this protein is 4-hydroxy-3-methylbut-2-en-1-yl diphosphate synthase (flavodoxin).